Reading from the N-terminus, the 697-residue chain is Phosphatase and actin regulator 4-B (697 aa).

The stretch at 42-67 (EVLERKISMRKPREELVKRGLIVDVP) is one RPEL 1 repeat. Disordered regions lie at residues 63-381 (IVDV…LTLA) and 450-569 (LKVP…SKDE). Positions 189 to 202 (HVPEKTSEKYRPKS) are enriched in basic and acidic residues. Composition is skewed to pro residues over residues 317–326 (PSPPLPPKRA) and 370–380 (APNPPVPPLTL). 3 stretches are compositionally biased toward acidic residues: residues 454 to 469 (DDDD…DESL), 501 to 514 (QEED…DTDS), and 522 to 532 (EEDEDEEEEET). RPEL repeat units follow at residues 579–604 (TQLN…QKNE) and 616–641 (RRLT…RFNE).

The protein belongs to the phosphatase and actin regulator family. As to quaternary structure, binds ppp1ca and actin.

Its subcellular location is the cytoplasm. It is found in the cell projection. The protein resides in the lamellipodium. In terms of biological role, regulator of protein phosphatase 1 (PP1) required for neural tube and optic fissure closure, and enteric neural crest cell (ENCCs) migration during development. Acts as an activator of PP1. During neural tube closure, localizes to the ventral neural tube and activates PP1, leading to down-regulate cell proliferation within cranial neural tissue and the neural retina. Also acts as a regulator of migration of enteric neural crest cells (ENCCs) by activating PP1, leading to repression of the integrin signaling through the rho/rock pathway. This chain is Phosphatase and actin regulator 4-B (phactr4-b), found in Xenopus laevis (African clawed frog).